The primary structure comprises 418 residues: Metal tolerance protein 1 (418 aa).

Over 1-56 (MDSHNSAPPQIAEVRMDISSSTSVAAGNKVCRGAACDFSDSSNSSKDARERMASMR) the chain is Cytoplasmic. A helical transmembrane segment spans residues 57 to 77 (KLIIAVILCIIFMAVEVVGGI). Over 78-89 (KANSLAILTDAA) the chain is Vacuolar. The chain crosses the membrane as a helical span at residues 90-110 (HLLSDVAAFAISLFSLWAAGW). Over 111 to 122 (EATPQQSYGFFR) the chain is Cytoplasmic. The helical transmembrane segment at 123–143 (IEILGALVSIQLIWLLAGILV) threads the bilayer. Over 144–160 (YEAIVRLINESGEVQGS) the chain is Vacuolar. Residues 161–181 (LMFAVSAFGLFVNIIMAVLLG) form a helical membrane-spanning segment. The tract at residues 182–246 (HDHGHGHGHG…HHPGTGHHHH (65 aa)) is required for zinc-binding. The Cytoplasmic segment spans residues 182–282 (HDHGHGHGHG…RRNINVHSAY (101 aa)). The tract at residues 186 to 248 (HGHGHGHGHG…PGTGHHHHDA (63 aa)) is disordered. The span at 196–227 (HSHDHDHGGSDHDHHHHEDQEHGHVHHHEDGH) shows a compositional bias: basic and acidic residues. Residues 235-245 (LHHHPGTGHHH) show a composition bias toward basic residues. The chain crosses the membrane as a helical span at residues 283–303 (LHVLGDSIQSIGVMIGGAIIW). Residues 304–307 (YKPE) lie on the Vacuolar side of the membrane. The helical transmembrane segment at 308 to 328 (WKIIDLICTLIFSVIVLFTTI) threads the bilayer. Residues 329–418 (KMLRNILEVL…SHVTIQIERE (90 aa)) lie on the Cytoplasmic side of the membrane.

This sequence belongs to the cation diffusion facilitator (CDF) transporter (TC 2.A.4) family. SLC30A subfamily.

It is found in the vacuole membrane. Its function is as follows. Involved in sequestration of excess zinc in the cytoplasm into vacuoles to maintain zinc homeostasis. This Oryza sativa subsp. japonica (Rice) protein is Metal tolerance protein 1 (MTP1).